Consider the following 129-residue polypeptide: Small ribosomal subunit protein uS11 (129 aa).

The protein belongs to the universal ribosomal protein uS11 family. In terms of assembly, part of the 30S ribosomal subunit. Interacts with proteins S7 and S18. Binds to IF-3.

In terms of biological role, located on the platform of the 30S subunit, it bridges several disparate RNA helices of the 16S rRNA. Forms part of the Shine-Dalgarno cleft in the 70S ribosome. The chain is Small ribosomal subunit protein uS11 from Dinoroseobacter shibae (strain DSM 16493 / NCIMB 14021 / DFL 12).